Reading from the N-terminus, the 203-residue chain is Dual-action ribosomal maturation protein DarP (203 aa).

Disordered stretches follow at residues 1–31 (MPPM…SKSQ) and 182–203 (GGAS…DDEA). The span at 186–203 (DSDDEAADDAGDDHDDEA) shows a compositional bias: acidic residues.

The protein belongs to the DarP family.

The protein resides in the cytoplasm. Its function is as follows. Member of a network of 50S ribosomal subunit biogenesis factors which assembles along the 30S-50S interface, preventing incorrect 23S rRNA structures from forming. Promotes peptidyl transferase center (PTC) maturation. In Burkholderia cenocepacia (strain HI2424), this protein is Dual-action ribosomal maturation protein DarP.